The sequence spans 265 residues: Very long chain fatty acid elongase 6 (265 aa).

Asn2 carries N-linked (GlcNAc...) asparagine glycosylation. 7 consecutive transmembrane segments (helical) span residues 34 to 51 (FLFSALYAAFIFGGRHLM), 70 to 90 (LAVFSIFGALRTGAYMVYILM), 111 to 131 (FWAYAFVLSKAPELGDTIFII), 136 to 156 (KLIFLHWYHHITVLLYSWYSY), 159 to 179 (MVAGGGWFMTMNYGVHAVMYS), 197 to 217 (FITLSQITQMLMGCVVNYLVF), and 232 to 252 (IFWSSLMYLSYLVLFCHFFFE).

It belongs to the ELO family. ELOVL6 subfamily. N-Glycosylated. In terms of tissue distribution, ubiquitous.

It is found in the endoplasmic reticulum membrane. The catalysed reaction is a very-long-chain acyl-CoA + malonyl-CoA + H(+) = a very-long-chain 3-oxoacyl-CoA + CO2 + CoA. It carries out the reaction hexadecanoyl-CoA + malonyl-CoA + H(+) = 3-oxooctadecanoyl-CoA + CO2 + CoA. It catalyses the reaction (9Z)-hexadecenoyl-CoA + malonyl-CoA + H(+) = 3-oxo-(11Z)-octadecenoyl-CoA + CO2 + CoA. The enzyme catalyses dodecanoyl-CoA + malonyl-CoA + H(+) = 3-oxotetradecanoyl-CoA + CO2 + CoA. The catalysed reaction is tetradecanoyl-CoA + malonyl-CoA + H(+) = 3-oxohexadecanoyl-CoA + CO2 + CoA. It carries out the reaction (9Z)-octadecenoyl-CoA + malonyl-CoA + H(+) = 3-oxo-(11Z)-eicosenoyl-CoA + CO2 + CoA. It catalyses the reaction (9Z,12Z)-octadecadienoyl-CoA + malonyl-CoA + H(+) = (11Z,14Z)-3-oxoicosa-11,14-dienoyl-CoA + CO2 + CoA. The enzyme catalyses (9Z,12Z,15Z)-octadecatrienoyl-CoA + malonyl-CoA + H(+) = (11Z,14Z,17Z)-3-oxoeicosatrienoyl-CoA + CO2 + CoA. It functions in the pathway lipid metabolism; fatty acid biosynthesis. Its activity is regulated as follows. The reaction is stimulated by the presence of HSD17B12, the enzyme catalyzing the second step of the elongation cycle. Its function is as follows. Catalyzes the first and rate-limiting reaction of the four reactions that constitute the long-chain fatty acids elongation cycle. This endoplasmic reticulum-bound enzymatic process allows the addition of 2 carbons to the chain of long- and very long-chain fatty acids (VLCFAs) per cycle. Condensing enzyme that elongates fatty acids with 12, 14 and 16 carbons with higher activity toward C16:0 acyl-CoAs. Catalyzes the synthesis of unsaturated C16 long chain fatty acids and, to a lesser extent, C18:0 and those with low desaturation degree. May participate in the production of saturated and monounsaturated VLCFAs of different chain lengths that are involved in multiple biological processes as precursors of membrane lipids and lipid mediators. In Homo sapiens (Human), this protein is Very long chain fatty acid elongase 6.